The chain runs to 257 residues: Snake venom serine protease salmonase (257 aa).

An N-terminal signal peptide occupies residues 1 to 18; it reads MVLIRVLVNFLILQLSYA. A propeptide spanning residues 19 to 24 is cleaved from the precursor; it reads QKSSEL. The region spanning 25-248 is the Peptidase S1 domain; that stretch reads VIGGDECNIN…YIDWIQSIIA (224 aa). Intrachain disulfides connect cysteine 31/cysteine 162, cysteine 49/cysteine 65, cysteine 141/cysteine 209, cysteine 173/cysteine 188, and cysteine 199/cysteine 224. Histidine 64 acts as the Charge relay system in catalysis. Asparagine 78 carries N-linked (GlcNAc...) asparagine glycosylation. Aspartate 109 acts as the Charge relay system in catalysis. Serine 203 (charge relay system) is an active-site residue.

The protein belongs to the peptidase S1 family. Snake venom subfamily. As to quaternary structure, monomer. In terms of tissue distribution, expressed by the venom gland.

Its subcellular location is the secreted. Functionally, snake venom serine protease that may act in the hemostasis system of the prey. This is Snake venom serine protease salmonase from Gloydius brevicauda (Korean slamosa snake).